We begin with the raw amino-acid sequence, 127 residues long: Large ribosomal subunit protein bL12 (127 aa).

Residues 94-114 form a disordered region; the sequence is VDGAPSTLKEAASKEEAEEAK. The segment covering 104 to 114 has biased composition (basic and acidic residues); the sequence is AASKEEAEEAK.

Belongs to the bacterial ribosomal protein bL12 family. In terms of assembly, homodimer. Part of the ribosomal stalk of the 50S ribosomal subunit. Forms a multimeric L10(L12)X complex, where L10 forms an elongated spine to which 2 to 4 L12 dimers bind in a sequential fashion. Binds GTP-bound translation factors.

In terms of biological role, forms part of the ribosomal stalk which helps the ribosome interact with GTP-bound translation factors. Is thus essential for accurate translation. This is Large ribosomal subunit protein bL12 from Nitratidesulfovibrio vulgaris (strain ATCC 29579 / DSM 644 / CCUG 34227 / NCIMB 8303 / VKM B-1760 / Hildenborough) (Desulfovibrio vulgaris).